Here is a 225-residue protein sequence, read N- to C-terminus: N-(5'-phosphoribosyl)anthranilate isomerase (225 aa).

It belongs to the TrpF family.

The catalysed reaction is N-(5-phospho-beta-D-ribosyl)anthranilate = 1-(2-carboxyphenylamino)-1-deoxy-D-ribulose 5-phosphate. It participates in amino-acid biosynthesis; L-tryptophan biosynthesis; L-tryptophan from chorismate: step 3/5. The protein is N-(5'-phosphoribosyl)anthranilate isomerase of Nitrobacter winogradskyi (strain ATCC 25391 / DSM 10237 / CIP 104748 / NCIMB 11846 / Nb-255).